We begin with the raw amino-acid sequence, 223 residues long: Class E basic helix-loop-helix protein 23 (223 aa).

The disordered stretch occupies residues 32-93 (PETTRGFGAS…GVAVDARRRP (62 aa)). In terms of domain architecture, bHLH spans 98-152 (SLRLSINARERRRMHDLNDALDGLRAVIPYAHSPSVRKLSKIATLLLAKNYILMQ).

As to expression, expressed in brain and retina.

The protein localises to the nucleus. May function as transcriptional repressor. May modulate the expression of genes required for the differentiation and/or maintenance of pancreatic and neuronal cell types. May be important for rod bipolar cell maturation. The sequence is that of Class E basic helix-loop-helix protein 23 (Bhlhe23) from Mus musculus (Mouse).